Reading from the N-terminus, the 443-residue chain is Enolase (443 aa).

Q167 serves as a coordination point for (2R)-2-phosphoglycerate. The Proton donor role is filled by E209. 3 residues coordinate Mg(2+): D246, E291, and D318. K343, R372, S373, and K394 together coordinate (2R)-2-phosphoglycerate. The active-site Proton acceptor is K343.

This sequence belongs to the enolase family. Component of the RNA degradosome, a multiprotein complex involved in RNA processing and mRNA degradation. The cofactor is Mg(2+).

Its subcellular location is the cytoplasm. It localises to the secreted. It is found in the cell surface. The enzyme catalyses (2R)-2-phosphoglycerate = phosphoenolpyruvate + H2O. Its pathway is carbohydrate degradation; glycolysis; pyruvate from D-glyceraldehyde 3-phosphate: step 4/5. Its function is as follows. Catalyzes the reversible conversion of 2-phosphoglycerate (2-PG) into phosphoenolpyruvate (PEP). It is essential for the degradation of carbohydrates via glycolysis. The polypeptide is Enolase (Wigglesworthia glossinidia brevipalpis).